The sequence spans 885 residues: Leucine--tRNA ligase (885 aa).

The 'HIGH' region signature appears at 43–53; it reads PYTSGQLHMGH. A 'KMSKS' region motif is present at residues 571–575; that stretch reads KMSKS. Position 574 (K574) interacts with ATP. Positions 866-885 are disordered; sequence SVANKAEPGRPAIHVDEADD.

It belongs to the class-I aminoacyl-tRNA synthetase family.

It localises to the cytoplasm. The enzyme catalyses tRNA(Leu) + L-leucine + ATP = L-leucyl-tRNA(Leu) + AMP + diphosphate. In Halobacterium salinarum (strain ATCC 700922 / JCM 11081 / NRC-1) (Halobacterium halobium), this protein is Leucine--tRNA ligase.